A 192-amino-acid polypeptide reads, in one-letter code: Orotate phosphoribosyltransferase (192 aa).

116–124 lines the 5-phospho-alpha-D-ribose 1-diphosphate pocket; sequence EDVVTTGKS. Threonine 120 and arginine 148 together coordinate orotate.

The protein belongs to the purine/pyrimidine phosphoribosyltransferase family. PyrE subfamily. Homodimer. Mg(2+) serves as cofactor.

It catalyses the reaction orotidine 5'-phosphate + diphosphate = orotate + 5-phospho-alpha-D-ribose 1-diphosphate. It participates in pyrimidine metabolism; UMP biosynthesis via de novo pathway; UMP from orotate: step 1/2. Its function is as follows. Catalyzes the transfer of a ribosyl phosphate group from 5-phosphoribose 1-diphosphate to orotate, leading to the formation of orotidine monophosphate (OMP). The chain is Orotate phosphoribosyltransferase from Clostridium perfringens (strain ATCC 13124 / DSM 756 / JCM 1290 / NCIMB 6125 / NCTC 8237 / Type A).